The sequence spans 272 residues: HMP-PP phosphatase (272 aa).

Asp8 serves as the catalytic Nucleophile. Mg(2+) contacts are provided by Asp8, Asp10, and Asp212.

The protein belongs to the HAD-like hydrolase superfamily. Cof family. Mg(2+) serves as cofactor.

It catalyses the reaction 4-amino-2-methyl-5-(diphosphooxymethyl)pyrimidine + H2O = 4-amino-2-methyl-5-(phosphooxymethyl)pyrimidine + phosphate + H(+). Catalyzes the hydrolysis of 4-amino-2-methyl-5-hydroxymethylpyrimidine pyrophosphate (HMP-PP) to 4-amino-2-methyl-5-hydroxymethylpyrimidine phosphate (HMP-P). In Salmonella choleraesuis (strain SC-B67), this protein is HMP-PP phosphatase.